The sequence spans 534 residues: Coiled-coil domain-containing protein 183 (534 aa).

3 coiled-coil regions span residues 10–54, 136–209, and 321–406; these read EAQI…NLRR, DATK…DMTV, and RFLA…LLVI.

The sequence is that of Coiled-coil domain-containing protein 183 (Ccdc183) from Mus musculus (Mouse).